A 388-amino-acid chain; its full sequence is GTPase Obg (388 aa).

The Obg domain maps to Met1–Leu159. Residues Ala160–Gln333 form the OBG-type G domain. GTP contacts are provided by residues Gly166–Ser173, Phe191–Val195, Asp213–Gly216, Asn283–Asp286, and Ser314–Tyr316. Mg(2+)-binding residues include Ser173 and Thr193.

The protein belongs to the TRAFAC class OBG-HflX-like GTPase superfamily. OBG GTPase family. As to quaternary structure, monomer. Mg(2+) serves as cofactor.

Its subcellular location is the cytoplasm. Functionally, an essential GTPase which binds GTP, GDP and possibly (p)ppGpp with moderate affinity, with high nucleotide exchange rates and a fairly low GTP hydrolysis rate. Plays a role in control of the cell cycle, stress response, ribosome biogenesis and in those bacteria that undergo differentiation, in morphogenesis control. This Shewanella oneidensis (strain ATCC 700550 / JCM 31522 / CIP 106686 / LMG 19005 / NCIMB 14063 / MR-1) protein is GTPase Obg.